The following is a 213-amino-acid chain: Orotate phosphoribosyltransferase (213 aa).

Lys-26 is a binding site for 5-phospho-alpha-D-ribose 1-diphosphate. An orotate-binding site is contributed by 34-35 (FF). Residues 72 to 73 (YK), Arg-98, Lys-99, Lys-102, and 123 to 131 (DDVISAGTS) each bind 5-phospho-alpha-D-ribose 1-diphosphate. Positions 127 and 155 each coordinate orotate.

It belongs to the purine/pyrimidine phosphoribosyltransferase family. PyrE subfamily. Homodimer. The cofactor is Mg(2+).

The catalysed reaction is orotidine 5'-phosphate + diphosphate = orotate + 5-phospho-alpha-D-ribose 1-diphosphate. It functions in the pathway pyrimidine metabolism; UMP biosynthesis via de novo pathway; UMP from orotate: step 1/2. Functionally, catalyzes the transfer of a ribosyl phosphate group from 5-phosphoribose 1-diphosphate to orotate, leading to the formation of orotidine monophosphate (OMP). The protein is Orotate phosphoribosyltransferase of Neisseria gonorrhoeae (strain ATCC 700825 / FA 1090).